The following is a 540-amino-acid chain: GMP synthase [glutamine-hydrolyzing] (540 aa).

Positions 29 to 222 (KILIVDFGSQ…VRKVAGLTGD (194 aa)) constitute a Glutamine amidotransferase type-1 domain. Cys-106 acts as the Nucleophile in catalysis. Active-site residues include His-196 and Glu-198. In terms of domain architecture, GMPS ATP-PPase spans 223–415 (WTMRAFREEA…LGLPDVFVGR (193 aa)). 250 to 256 (SGGVDSA) is an ATP binding site.

Homodimer.

It catalyses the reaction XMP + L-glutamine + ATP + H2O = GMP + L-glutamate + AMP + diphosphate + 2 H(+). Its pathway is purine metabolism; GMP biosynthesis; GMP from XMP (L-Gln route): step 1/1. In terms of biological role, catalyzes the synthesis of GMP from XMP. The polypeptide is GMP synthase [glutamine-hydrolyzing] (Rhodopseudomonas palustris (strain ATCC BAA-98 / CGA009)).